A 740-amino-acid chain; its full sequence is D-ornithine 4,5-aminomutase subunit beta (740 aa).

Substrate contacts are provided by residues Glu81, Tyr160, His182, and 294–296 (RAQ). The B12-binding domain occupies 602-739 (PLKIVAATVG…VKKRREMREG (138 aa)). Residues 614–616 (EHS) and His615 contribute to the adenosylcob(III)alamin site. An N6-(pyridoxal phosphate)lysine modification is found at Lys626. Adenosylcob(III)alamin contacts are provided by residues 664–669 (STIISH), Thr700, and Ser720.

Heterotetramer of 2 alpha (OraS) and 2 beta (OraE) subunits. Adenosylcob(III)alamin is required as a cofactor. Requires pyridoxal 5'-phosphate as cofactor.

It catalyses the reaction D-ornithine = (2R,4S)-2,4-diaminopentanoate. Its activity is regulated as follows. Increased activity in the presence of dithiothreitol (DTT) in vitro. Inhibited by 1 mM potassium phosphate and potassium chloride. Inhibited by L-alpha-ornithine, D,L-alpha-lysine, L-beta-lysine (50%-60%), L-alpha-lysine (26%) and by delta-amino-n-valeric acid to a lesser extent. Significant decrease in activity is observed in the presence of 0.2 mM p-chloromercuribenzoate, N-ethylmaleimide and also by 2 mM iodoacetate to a lesser extent but not inhibited by arsenite. Its function is as follows. Component of a complex that catalyzes the reversible migration of the omega amino group of D-ornithine to C-4 to form (2R,4S)-2,4-diaminopentanoic acid. OraE may be the catalytic subunit. Active only on D-ornithine and 2,4-diaminopentanoic acid but not active on L-ornithine, L-beta-lysine, L-alpha-lysine or D-alpha-lysine. This chain is D-ornithine 4,5-aminomutase subunit beta (oraE), found in Acetoanaerobium sticklandii (strain ATCC 12662 / DSM 519 / JCM 1433 / CCUG 9281 / NCIMB 10654 / HF) (Clostridium sticklandii).